The primary structure comprises 291 residues: ATP synthase gamma chain (291 aa).

The protein belongs to the ATPase gamma chain family. F-type ATPases have 2 components, CF(1) - the catalytic core - and CF(0) - the membrane proton channel. CF(1) has five subunits: alpha(3), beta(3), gamma(1), delta(1), epsilon(1). CF(0) has three main subunits: a, b and c.

The protein resides in the cell membrane. Produces ATP from ADP in the presence of a proton gradient across the membrane. The gamma chain is believed to be important in regulating ATPase activity and the flow of protons through the CF(0) complex. This chain is ATP synthase gamma chain, found in Buchnera aphidicola subsp. Schizaphis graminum (strain Sg).